Reading from the N-terminus, the 189-residue chain is Crossover junction endodeoxyribonuclease RuvC (189 aa).

Active-site residues include D7, E68, and D141. D7, E68, and D141 together coordinate Mg(2+).

The protein belongs to the RuvC family. As to quaternary structure, homodimer which binds Holliday junction (HJ) DNA. The HJ becomes 2-fold symmetrical on binding to RuvC with unstacked arms; it has a different conformation from HJ DNA in complex with RuvA. In the full resolvosome a probable DNA-RuvA(4)-RuvB(12)-RuvC(2) complex forms which resolves the HJ. Mg(2+) serves as cofactor.

The protein resides in the cytoplasm. It carries out the reaction Endonucleolytic cleavage at a junction such as a reciprocal single-stranded crossover between two homologous DNA duplexes (Holliday junction).. Its function is as follows. The RuvA-RuvB-RuvC complex processes Holliday junction (HJ) DNA during genetic recombination and DNA repair. Endonuclease that resolves HJ intermediates. Cleaves cruciform DNA by making single-stranded nicks across the HJ at symmetrical positions within the homologous arms, yielding a 5'-phosphate and a 3'-hydroxyl group; requires a central core of homology in the junction. The consensus cleavage sequence is 5'-(A/T)TT(C/G)-3'. Cleavage occurs on the 3'-side of the TT dinucleotide at the point of strand exchange. HJ branch migration catalyzed by RuvA-RuvB allows RuvC to scan DNA until it finds its consensus sequence, where it cleaves and resolves the cruciform DNA. The sequence is that of Crossover junction endodeoxyribonuclease RuvC from Rhodococcus jostii (strain RHA1).